The primary structure comprises 368 residues: Peptide chain release factor 2 (368 aa).

Residue glutamine 250 is modified to N5-methylglutamine.

Belongs to the prokaryotic/mitochondrial release factor family. Post-translationally, methylated by PrmC. Methylation increases the termination efficiency of RF2.

The protein resides in the cytoplasm. Peptide chain release factor 2 directs the termination of translation in response to the peptide chain termination codons UGA and UAA. The protein is Peptide chain release factor 2 of Mycolicibacterium vanbaalenii (strain DSM 7251 / JCM 13017 / BCRC 16820 / KCTC 9966 / NRRL B-24157 / PYR-1) (Mycobacterium vanbaalenii).